We begin with the raw amino-acid sequence, 479 residues long: Caspase-8 (479 aa).

The propeptide occupies 1–216; it reads MDFSRNLYDI…TISDSPREQD (216 aa). DED domains follow at residues 2–80 and 100–177; these read DFSR…TYLN and AYRV…IIND. Phosphoserine occurs at positions 188 and 211. An N6-acetyllysine modification is found at K224. H317 is an active-site residue. A Phosphotyrosine modification is found at Y334. The active site involves C360. A propeptide spanning residues 375–384 is cleaved from the precursor; it reads SEEQPYLEMD. At Y380 the chain carries Phosphotyrosine; by SRC. Position 387 is a phosphoserine; by CDK1 (S387). R413 carries the post-translational modification (Microbial infection) ADP-riboxanated arginine.

The protein belongs to the peptidase C14A family. In terms of assembly, heterotetramer that consists of two anti-parallel arranged heterodimers, each one formed by a 18 kDa (p18) and a 10 kDa (p10) subunit. Component of the death-induced signaling complex (DISC) composed of cell surface receptor FAS/CD95 or TNFRSF1A, adapter protein FADD and the CASP8 protease; recruitment of CASP8 to the complex is required for processing of CASP8 into the p18 and p10 subunits. Component of the AIM2 PANoptosome complex, a multiprotein complex that drives inflammatory cell death (PANoptosis). Interacts with CFLAR and PEA15. Interacts with TNFAIP8L2. Interacts with CASP8AP2. Interacts with RFFL and RNF34; negatively regulate CASP8 through proteasomal degradation. Interacts with NOL3; decreases CASP8 activity in a mitochondria localization- and phosphorylation-dependent manner and this interaction is dissociated by calcium. Interacts with UBR2ca. Interacts with RIPK1. Interacts with stimulated TNFRSF10B; this interaction is followed by CASP8 proteolytic cleavage and activation. Interacts (phosphorylated on Tyr-380) with PIK3R1. As to quaternary structure, interacts at the endoplasmic reticulum with a complex containing BCAP31, BAP29, BCL2 and/or BCL2L1. (Microbial infection) Interacts with human cytomegalovirus/HHV-5 protein vICA/UL36; this interaction inhibits CASP8 activation. In terms of assembly, (Microbial infection) Interacts with NleF from pathogenic E.coli. As to quaternary structure, (Microbial infection) Interacts with molluscum contagiosum virus protein MC160. (Microbial infection) Interacts (via RIP homotypic interaction motif) with herpes simplex virus 1/HHV-1 protein RIR1/ICP6 (via RIP homotypic interaction motif); this interaction prevents necroptosis activation. In terms of assembly, (Microbial infection) Interacts (via RIP homotypic interaction motif) with herpes simplex virus 2/HHV-2 protein RIR1/ICP10 (via RIP homotypic interaction motif); this interaction prevents necroptosis activation. In terms of processing, generation of the p10 and p18 subunits requires association with the death-inducing signaling complex (DISC), whereas additional processing is likely due to the autocatalytic activity of the activated protease. GZMB and CASP10 can be involved in these processing events. Phosphorylation on Ser-387 during mitosis by CDK1 inhibits activation by proteolysis and prevents apoptosis. Phosphorylation on Tyr-380 by SRC is mediated by interaction with the SRC SH2 domain and does not affect dimerization or recruitment to the death-inducing signaling complex (DISC) but negatively regulates DISC-mediated processing and activation of CASP8, down-regulating its proapoptotic function. Phosphorylation on Tyr-380 also enhances localization to lamellipodia in migrating cells. Post-translationally, (Microbial infection) ADP-riboxanation by C.violaceum CopC blocks CASP8 processing, preventing CASP8 activation and ability to mediate extrinsic apoptosis. In terms of processing, (Microbial infection) Proteolytically cleaved by the cowpox virus CRMA death inhibitory protein. In terms of tissue distribution, isoform 1, isoform 5 and isoform 7 are expressed in a wide variety of tissues. Highest expression in peripheral blood leukocytes, spleen, thymus and liver. Barely detectable in brain, testis and skeletal muscle.

It localises to the cytoplasm. The protein localises to the nucleus. The protein resides in the cell projection. It is found in the lamellipodium. It catalyses the reaction Strict requirement for Asp at position P1 and has a preferred cleavage sequence of (Leu/Asp/Val)-Glu-Thr-Asp-|-(Gly/Ser/Ala).. CASP8 activity is restricted by RIPK1. Inhibited by the effector protein NleF that is produced by pathogenic E.coli; this inhibits apoptosis. Thiol protease that plays a key role in programmed cell death by acting as a molecular switch for apoptosis, necroptosis and pyroptosis, and is required to prevent tissue damage during embryonic development and adulthood. Initiator protease that induces extrinsic apoptosis by mediating cleavage and activation of effector caspases responsible for FAS/CD95-mediated and TNFRSF1A-induced cell death. Cleaves and activates effector caspases CASP3, CASP4, CASP6, CASP7, CASP9 and CASP10. Binding to the adapter molecule FADD recruits it to either receptor FAS/TNFRSF6 or TNFRSF1A. The resulting aggregate called the death-inducing signaling complex (DISC) performs CASP8 proteolytic activation. The active dimeric enzyme is then liberated from the DISC and free to activate downstream apoptotic proteases. Proteolytic fragments of the N-terminal propeptide (termed CAP3, CAP5 and CAP6) are likely retained in the DISC. In addition to extrinsic apoptosis, also acts as a negative regulator of necroptosis: acts by cleaving RIPK1 at 'Asp-324', which is crucial to inhibit RIPK1 kinase activity, limiting TNF-induced apoptosis, necroptosis and inflammatory response. Also able to initiate pyroptosis by mediating cleavage and activation of gasdermin-C and -D (GSDMC and GSDMD, respectively): gasdermin cleavage promotes release of the N-terminal moiety that binds to membranes and forms pores, triggering pyroptosis. Initiates pyroptosis following inactivation of MAP3K7/TAK1. Also acts as a regulator of innate immunity by mediating cleavage and inactivation of N4BP1 downstream of TLR3 or TLR4, thereby promoting cytokine production. May participate in the Granzyme B (GZMB) cell death pathways. Cleaves PARP1 and PARP2. Independent of its protease activity, promotes cell migration following phosphorylation at Tyr-380. Its function is as follows. Lacks the catalytic site and may interfere with the pro-apoptotic activity of the complex. In terms of biological role, lacks the catalytic site and may interfere with the pro-apoptotic activity of the complex. Acts as an inhibitor of the caspase cascade. This is Caspase-8 from Homo sapiens (Human).